Reading from the N-terminus, the 57-residue chain is Potassium channel toxin KTx1 (57 aa).

The first 13 residues, 1–13 (FLVLLLVSLMCYA), serve as a signal peptide directing secretion. Residues 14–18 (EIAEG) constitute a propeptide that is removed on maturation. 3 disulfide bridges follow: C24–C37, C30–C42, and C36–C51.

The protein belongs to the scorpion calcin-like family. KTX subfamily. Expressed by the venom gland.

The protein resides in the secreted. In terms of biological role, this recombinant peptide inhibits voltage-gated potassium channels mKv1.3/KCNA3 (IC(50)=1.70 uM), mKv1.1/KCNA1 (10 uM inhibits 40% of currents) and hKv1.2/KCNA2 (10 uM inhibits 42% of currents). May also increase intracellular calcium release through the activation of nuclear inositol 1,4,5-trisphosphate receptors (ITPR) of cardiomyocytes, thereby causing an increase in the contraction frequency of these cells. The chain is Potassium channel toxin KTx1 from Isometrus maculatus (Lesser brown scorpion).